A 264-amino-acid polypeptide reads, in one-letter code: Thymidylate synthase (264 aa).

Residue R21 participates in dUMP binding. Residue H51 coordinates (6R)-5,10-methylene-5,6,7,8-tetrahydrofolate. 126–127 (RR) is a binding site for dUMP. Catalysis depends on C146, which acts as the Nucleophile. DUMP-binding positions include 166–169 (RSAD), N177, and 207–209 (HLY). (6R)-5,10-methylene-5,6,7,8-tetrahydrofolate is bound at residue D169. A263 is a binding site for (6R)-5,10-methylene-5,6,7,8-tetrahydrofolate.

The protein belongs to the thymidylate synthase family. Bacterial-type ThyA subfamily. As to quaternary structure, homodimer.

The protein localises to the cytoplasm. The enzyme catalyses dUMP + (6R)-5,10-methylene-5,6,7,8-tetrahydrofolate = 7,8-dihydrofolate + dTMP. It functions in the pathway pyrimidine metabolism; dTTP biosynthesis. Functionally, catalyzes the reductive methylation of 2'-deoxyuridine-5'-monophosphate (dUMP) to 2'-deoxythymidine-5'-monophosphate (dTMP) while utilizing 5,10-methylenetetrahydrofolate (mTHF) as the methyl donor and reductant in the reaction, yielding dihydrofolate (DHF) as a by-product. This enzymatic reaction provides an intracellular de novo source of dTMP, an essential precursor for DNA biosynthesis. The chain is Thymidylate synthase from Rhodopirellula baltica (strain DSM 10527 / NCIMB 13988 / SH1).